Reading from the N-terminus, the 397-residue chain is 3-hydroxybenzoate 6-hydroxylase (397 aa).

This sequence belongs to the 3-hydroxybenzoate 6-hydroxylase family. As to quaternary structure, monomer. It depends on FAD as a cofactor.

It catalyses the reaction 3-hydroxybenzoate + NADH + O2 + H(+) = 2,5-dihydroxybenzoate + NAD(+) + H2O. Inhibited by copper, mercury and iron ions. Functionally, catalyzes the NAD- or NADP-dependent conversion of 3-hydroxybenzoate to gentisate. NAD and NADP function equally well. The protein is 3-hydroxybenzoate 6-hydroxylase (mhbM) of Klebsiella oxytoca.